The sequence spans 390 residues: Protein arginine N-methyltransferase 1.1 (390 aa).

Over residues M1 to N10 the composition is skewed to basic and acidic residues. The interval M1–T59 is disordered. One can recognise an SAM-dependent MTase PRMT-type domain in the interval A69–R390. Active-site residues include E181 and E190.

This sequence belongs to the class I-like SAM-binding methyltransferase superfamily. Protein arginine N-methyltransferase family. Interacts with PRMT12, MBD7 and FIB2.

It is found in the nucleus. The protein localises to the cytoplasm. It carries out the reaction L-arginyl-[protein] + 2 S-adenosyl-L-methionine = N(omega),N(omega)-dimethyl-L-arginyl-[protein] + 2 S-adenosyl-L-homocysteine + 2 H(+). Functionally, methylates (mono and asymmetric dimethylation) the guanidino nitrogens of arginyl residues present in a glycine and arginine-rich domain. Type I arginine methyltransferase active on both histones and non-histone proteins. Required for leaves and flowers development. Mediates the methylation of MBD7 and MED36A. The polypeptide is Protein arginine N-methyltransferase 1.1 (PRMT11) (Arabidopsis thaliana (Mouse-ear cress)).